The following is a 665-amino-acid chain: Methionine--tRNA ligase (665 aa).

A 'HIGH' region motif is present at residues 13 to 23; that stretch reads YYPSGKLHIGS. The short motif at 309 to 313 is the 'KMSKS' region element; it reads KMSKS. Residue K312 coordinates ATP. Residues 562-665 form the tRNA-binding domain; sequence DFDKVEIRVA…PAVPNGSVIG (104 aa).

The protein belongs to the class-I aminoacyl-tRNA synthetase family. MetG type 2B subfamily. As to quaternary structure, homodimer.

The protein resides in the cytoplasm. The catalysed reaction is tRNA(Met) + L-methionine + ATP = L-methionyl-tRNA(Met) + AMP + diphosphate. In terms of biological role, is required not only for elongation of protein synthesis but also for the initiation of all mRNA translation through initiator tRNA(fMet) aminoacylation. The polypeptide is Methionine--tRNA ligase (metG) (Streptococcus pneumoniae serotype 4 (strain ATCC BAA-334 / TIGR4)).